The primary structure comprises 398 residues: 1,4-beta-D-glucan cellobiohydrolase CEL6C (398 aa).

Residues 1-18 (MKITSSAAALALVASAVA) form the signal peptide. The N-linked (GlcNAc...) asparagine glycan is linked to Asn-70. Residue Asp-125 is part of the active site. Asp-170 acts as the Proton donor in catalysis. Substrate-binding residues include Trp-218, Trp-318, Lys-346, and Glu-350.

The protein belongs to the glycosyl hydrolase 6 (cellulase B) family. Both N- and O-glycosylated.

The protein localises to the secreted. It catalyses the reaction Hydrolysis of (1-&gt;4)-beta-D-glucosidic linkages in cellulose and cellotetraose, releasing cellobiose from the non-reducing ends of the chains.. Exoglucanase that plays an important function in biomass degradation by catalyzing the hydrolysis of the non-reducing end beta-1,4-glucosidic linkages in cellulose and cellotetraose to release cellobiose. Hydrolyzes crystalline and amorphous cellulose but is inactive on hydroxyethyl cellulose, mannan, galactomannan, xyloglucan, arabinoxylan, arabinan, xylan, and pectin. This chain is 1,4-beta-D-glucan cellobiohydrolase CEL6C, found in Podospora anserina (strain S / ATCC MYA-4624 / DSM 980 / FGSC 10383) (Pleurage anserina).